The sequence spans 114 residues: UPF0212 protein Mbur_0968 (114 aa).

It belongs to the UPF0212 family.

The polypeptide is UPF0212 protein Mbur_0968 (Methanococcoides burtonii (strain DSM 6242 / NBRC 107633 / OCM 468 / ACE-M)).